The sequence spans 87 residues: Retinal rod rhodopsin-sensitive cGMP 3',5'-cyclic phosphodiesterase subunit gamma (87 aa).

Methionine 1 carries the post-translational modification N-acetylmethionine. Positions 1-12 (MNLEPPKGEIRS) are enriched in basic and acidic residues. The disordered stretch occupies residues 1–55 (MNLEPPKGEIRSATRVIGGPVTPRKGPPKFKQRQTRQFKSKPPKKGVQGFGDDIP). The span at 26 to 44 (GPPKFKQRQTRQFKSKPPK) shows a compositional bias: basic residues.

It belongs to the rod/cone cGMP-PDE gamma subunit family. As to quaternary structure, oligomer composed of two catalytic chains (alpha and beta), an inhibitory chain (gamma) and the delta chain.

The catalysed reaction is 3',5'-cyclic GMP + H2O = GMP + H(+). In terms of biological role, participates in processes of transmission and amplification of the visual signal. cGMP-PDEs are the effector molecules in G-protein-mediated phototransduction in vertebrate rods and cones. The sequence is that of Retinal rod rhodopsin-sensitive cGMP 3',5'-cyclic phosphodiesterase subunit gamma (Pde6g) from Mus musculus (Mouse).